We begin with the raw amino-acid sequence, 256 residues long: Triosephosphate isomerase (256 aa).

12 to 14 (NWK) contacts substrate. The active-site Electrophile is histidine 99. Catalysis depends on glutamate 171, which acts as the Proton acceptor. Residues glycine 177, serine 217, and 238 to 239 (GG) contribute to the substrate site.

The protein belongs to the triosephosphate isomerase family. As to quaternary structure, homodimer.

It localises to the cytoplasm. It catalyses the reaction D-glyceraldehyde 3-phosphate = dihydroxyacetone phosphate. The protein operates within carbohydrate biosynthesis; gluconeogenesis. Its pathway is carbohydrate degradation; glycolysis; D-glyceraldehyde 3-phosphate from glycerone phosphate: step 1/1. Involved in the gluconeogenesis. Catalyzes stereospecifically the conversion of dihydroxyacetone phosphate (DHAP) to D-glyceraldehyde-3-phosphate (G3P). The protein is Triosephosphate isomerase of Rubrobacter xylanophilus (strain DSM 9941 / JCM 11954 / NBRC 16129 / PRD-1).